Here is a 967-residue protein sequence, read N- to C-terminus: Isoleucine--tRNA ligase (967 aa).

Residues 68-78 (PYANGTLHMGH) carry the 'HIGH' region motif. Residue Glu-583 participates in L-isoleucyl-5'-AMP binding. A 'KMSKS' region motif is present at residues 624 to 628 (KMSKS). Residue Lys-627 coordinates ATP. Positions 937, 940, 957, and 960 each coordinate Zn(2+).

Belongs to the class-I aminoacyl-tRNA synthetase family. IleS type 1 subfamily. As to quaternary structure, monomer. It depends on Zn(2+) as a cofactor.

It localises to the cytoplasm. The enzyme catalyses tRNA(Ile) + L-isoleucine + ATP = L-isoleucyl-tRNA(Ile) + AMP + diphosphate. In terms of biological role, catalyzes the attachment of isoleucine to tRNA(Ile). As IleRS can inadvertently accommodate and process structurally similar amino acids such as valine, to avoid such errors it has two additional distinct tRNA(Ile)-dependent editing activities. One activity is designated as 'pretransfer' editing and involves the hydrolysis of activated Val-AMP. The other activity is designated 'posttransfer' editing and involves deacylation of mischarged Val-tRNA(Ile). This chain is Isoleucine--tRNA ligase, found in Prochlorococcus marinus (strain NATL1A).